The primary structure comprises 521 residues: GMP synthase [glutamine-hydrolyzing] (521 aa).

The Glutamine amidotransferase type-1 domain occupies 5-197 (KILILDFGSQ…VLDICGAQPG (193 aa)). Cys-81 serves as the catalytic Nucleophile. Catalysis depends on residues His-171 and Glu-173. The GMPS ATP-PPase domain occupies 198 to 390 (WTMPNYIEEA…LGLPREMVYR (193 aa)). 225–231 (SGGVDSS) is a binding site for ATP.

In terms of assembly, homodimer.

It catalyses the reaction XMP + L-glutamine + ATP + H2O = GMP + L-glutamate + AMP + diphosphate + 2 H(+). It participates in purine metabolism; GMP biosynthesis; GMP from XMP (L-Gln route): step 1/1. Functionally, catalyzes the synthesis of GMP from XMP. In Neisseria meningitidis serogroup A / serotype 4A (strain DSM 15465 / Z2491), this protein is GMP synthase [glutamine-hydrolyzing] (guaA).